A 609-amino-acid polypeptide reads, in one-letter code: 2',5'-phosphodiesterase 12 (609 aa).

A mitochondrion-targeting transit peptide spans 1–16; the sequence is MWRLPGVRAALRGVRT. The tract at residues 203–231 is disordered; sequence PRAAEPEGGGPSSSSPSSPSPGWTETGVD. Positions 214–224 are enriched in low complexity; the sequence is SSSSPSSPSPG. At Ser217 the chain carries Phosphoserine. Residues Glu351, Asp496, and Asn498 each coordinate Mg(2+). Asp496 serves as the catalytic Proton donor/acceptor.

Belongs to the CCR4/nocturin family. Mg(2+) is required as a cofactor. Liver.

The protein localises to the mitochondrion matrix. It catalyses the reaction Exonucleolytic cleavage of poly(A) to 5'-AMP.. Enzyme that cleaves 2',5'-phosphodiester bond linking adenosines of the 5'-triphosphorylated oligoadenylates, triphosphorylated oligoadenylates referred as 2-5A modulates the 2-5A system. Degrades triphosphorylated 2-5A to produce AMP and ATP. Also cleaves 3',5'-phosphodiester bond of oligoadenylates. Plays a role as a negative regulator of the 2-5A system that is one of the major pathways for antiviral and antitumor functions induced by interferons (IFNs). Suppression of this enzyme increases cellular 2-5A levels and decreases viral replication in cultured small-airway epithelial cells. The sequence is that of 2',5'-phosphodiesterase 12 (PDE12) from Bos taurus (Bovine).